The primary structure comprises 403 residues: MSHRKFSAPRHGSLGFLPRKRSSRHRGKVKSFPKDDPSKPVHLTAFLGYKAGMTHIVREVDRPGSKVNKKEVVEAVTIVETPPMVVVGIVGYVETPRGLRTFKTVFAEHISDECKRRFYKNWHKSKKKAFTKYCKKWQDDTGKKQLEKDFNSMKKYCQVIRIIAHTQMRLLPLRQKKAHLMEIQVNGGTVAEKLDWARERLEQQVPVNQVFGQDEMIDVIGVTKGKGYKGVTSRWHTKKLPRKTHRGLRKVACIGAWHPARVAFSVARAGQKGYHHRTEINKKIYKIGQGYLIKDGKLIKNNASTDYDLSDKSINPLGGFVHYGEVTNDFIMLKGCVVGTKKRVLTLRKSLLVQTKRRALEKIDLKFIDTTSKFGHGRFQTMEEKKAFMGPLKKDRIAKEEGA.

A disordered region spans residues 1–37 (MSHRKFSAPRHGSLGFLPRKRSSRHRGKVKSFPKDDP). Residue Ser13 is modified to Phosphoserine. The span at 18–31 (PRKRSSRHRGKVKS) shows a compositional bias: basic residues. A Glycyl lysine isopeptide (Lys-Gly) (interchain with G-Cter in SUMO2) cross-link involves residue Lys39. Lys136 bears the N6-acetyllysine mark. Glycyl lysine isopeptide (Lys-Gly) (interchain with G-Cter in SUMO2) cross-links involve residues Lys224 and Lys226. A Tele-methylhistidine modification is found at His245. N6-acetyllysine; alternate occurs at positions 286 and 294. A Glycyl lysine isopeptide (Lys-Gly) (interchain with G-Cter in SUMO2); alternate cross-link involves residue Lys286. Lys294 participates in a covalent cross-link: Glycyl lysine isopeptide (Lys-Gly) (interchain with G-Cter in SUMO1); alternate. A Phosphoserine modification is found at Ser304. N6-acetyllysine; alternate is present on Lys366. Lys366 participates in a covalent cross-link: Glycyl lysine isopeptide (Lys-Gly) (interchain with G-Cter in SUMO2); alternate. Lys373 is modified (N6-acetyllysine). Glycyl lysine isopeptide (Lys-Gly) (interchain with G-Cter in SUMO2) cross-links involve residues Lys386, Lys393, and Lys399.

It belongs to the universal ribosomal protein uL3 family. Component of the large ribosomal subunit. Interacts with DHX33. Post-translationally, constitutively monomethylated at His-245 by METTL18. Methylation at His-245 regulates translation elongation by slowing ribosome traversal on tyrosine codons: slower elongation provides enough time for proper folding of synthesized proteins and prevents cellular aggregation of tyrosine-rich proteins. It is not required for incorporation of RPL3 into ribosomes.

It localises to the nucleus. The protein localises to the nucleolus. Its subcellular location is the cytoplasm. Component of the large ribosomal subunit. The ribosome is a large ribonucleoprotein complex responsible for the synthesis of proteins in the cell. The protein is Large ribosomal subunit protein uL3 (Rpl3) of Rattus norvegicus (Rat).